The primary structure comprises 166 residues: Phosphopantetheine adenylyltransferase (166 aa).

Substrate is bound at residue Ser-9. Residues Ser-9–Phe-10 and His-17 contribute to the ATP site. Lys-41, Thr-74, and Arg-88 together coordinate substrate. ATP-binding positions include Gly-89–Arg-91, Glu-99, and Asp-124–Ser-130.

Belongs to the bacterial CoaD family. As to quaternary structure, homohexamer. Mg(2+) serves as cofactor.

It localises to the cytoplasm. The catalysed reaction is (R)-4'-phosphopantetheine + ATP + H(+) = 3'-dephospho-CoA + diphosphate. It participates in cofactor biosynthesis; coenzyme A biosynthesis; CoA from (R)-pantothenate: step 4/5. In terms of biological role, reversibly transfers an adenylyl group from ATP to 4'-phosphopantetheine, yielding dephospho-CoA (dPCoA) and pyrophosphate. This chain is Phosphopantetheine adenylyltransferase, found in Lactobacillus gasseri (strain ATCC 33323 / DSM 20243 / BCRC 14619 / CIP 102991 / JCM 1131 / KCTC 3163 / NCIMB 11718 / NCTC 13722 / AM63).